We begin with the raw amino-acid sequence, 427 residues long: 3-phosphoshikimate 1-carboxyvinyltransferase (427 aa).

Residues K20, S21, and R25 each coordinate 3-phosphoshikimate. Residue K20 coordinates phosphoenolpyruvate. The phosphoenolpyruvate site is built by G92 and R120. Residues S166, Q168, D312, and K339 each contribute to the 3-phosphoshikimate site. Residue Q168 participates in phosphoenolpyruvate binding. Catalysis depends on D312, which acts as the Proton acceptor. Phosphoenolpyruvate-binding residues include R343 and R385.

Belongs to the EPSP synthase family. Monomer.

It localises to the cytoplasm. The catalysed reaction is 3-phosphoshikimate + phosphoenolpyruvate = 5-O-(1-carboxyvinyl)-3-phosphoshikimate + phosphate. It participates in metabolic intermediate biosynthesis; chorismate biosynthesis; chorismate from D-erythrose 4-phosphate and phosphoenolpyruvate: step 6/7. Functionally, catalyzes the transfer of the enolpyruvyl moiety of phosphoenolpyruvate (PEP) to the 5-hydroxyl of shikimate-3-phosphate (S3P) to produce enolpyruvyl shikimate-3-phosphate and inorganic phosphate. The sequence is that of 3-phosphoshikimate 1-carboxyvinyltransferase from Streptococcus uberis (strain ATCC BAA-854 / 0140J).